We begin with the raw amino-acid sequence, 120 residues long: Large ribosomal subunit protein uL22 (120 aa).

It belongs to the universal ribosomal protein uL22 family. Part of the 50S ribosomal subunit.

In terms of biological role, this protein binds specifically to 23S rRNA; its binding is stimulated by other ribosomal proteins, e.g. L4, L17, and L20. It is important during the early stages of 50S assembly. It makes multiple contacts with different domains of the 23S rRNA in the assembled 50S subunit and ribosome. The globular domain of the protein is located near the polypeptide exit tunnel on the outside of the subunit, while an extended beta-hairpin is found that lines the wall of the exit tunnel in the center of the 70S ribosome. This is Large ribosomal subunit protein uL22 from Corynebacterium glutamicum (strain R).